The sequence spans 134 residues: uncharacterized protein (134 aa).

Residues 4–24 (NLLILLSLLLVVVAIMWWLYE) form a helical membrane-spanning segment.

The protein localises to the membrane. This is an uncharacterized protein from Invertebrate iridescent virus 6 (IIV-6).